A 460-amino-acid polypeptide reads, in one-letter code: Allantoinase (460 aa).

6 residues coordinate Zn(2+): His70, His72, Lys157, His193, His250, and Asp323. N6-carboxylysine is present on Lys157.

It belongs to the metallo-dependent hydrolases superfamily. Allantoinase family. In terms of assembly, homotetramer. Zn(2+) is required as a cofactor. Post-translationally, carboxylation allows a single lysine to coordinate two zinc ions.

The catalysed reaction is (S)-allantoin + H2O = allantoate + H(+). Its pathway is nitrogen metabolism; (S)-allantoin degradation; allantoate from (S)-allantoin: step 1/1. Its function is as follows. Catalyzes the conversion of allantoin (5-ureidohydantoin) to allantoic acid by hydrolytic cleavage of the five-member hydantoin ring. Involved in the utilization of purines as secondary nitrogen sources, when primary sources are limiting. The polypeptide is Allantoinase (DAL1) (Saccharomyces cerevisiae (strain ATCC 204508 / S288c) (Baker's yeast)).